The sequence spans 88 residues: Small ribosomal subunit protein uS15 (88 aa).

Belongs to the universal ribosomal protein uS15 family. As to quaternary structure, part of the 30S ribosomal subunit. Forms a bridge to the 50S subunit in the 70S ribosome, contacting the 23S rRNA.

Its function is as follows. One of the primary rRNA binding proteins, it binds directly to 16S rRNA where it helps nucleate assembly of the platform of the 30S subunit by binding and bridging several RNA helices of the 16S rRNA. Forms an intersubunit bridge (bridge B4) with the 23S rRNA of the 50S subunit in the ribosome. In Geotalea daltonii (strain DSM 22248 / JCM 15807 / FRC-32) (Geobacter daltonii), this protein is Small ribosomal subunit protein uS15.